A 315-amino-acid chain; its full sequence is 1-aminocyclopropane-1-carboxylate oxidase 1 (315 aa).

The 101-residue stretch at 153-253 folds into the Fe2OG dioxygenase domain; that stretch reads PNFGTKVSNY…RMSLASFYNP (101 aa). Residues His-177, Asp-179, and His-234 each contribute to the Fe cation site.

This sequence belongs to the iron/ascorbate-dependent oxidoreductase family. The cofactor is Fe cation. Predominantly expressed in the petals and the stigma and style.

It carries out the reaction 1-aminocyclopropane-1-carboxylate + L-ascorbate + O2 = ethene + L-dehydroascorbate + hydrogen cyanide + CO2 + 2 H2O. Its pathway is alkene biosynthesis; ethylene biosynthesis via S-adenosyl-L-methionine; ethylene from S-adenosyl-L-methionine: step 2/2. In Solanum lycopersicum (Tomato), this protein is 1-aminocyclopropane-1-carboxylate oxidase 1 (ACO1).